Consider the following 378-residue polypeptide: Dihydroorotate dehydrogenase (quinone) (378 aa).

FMN contacts are provided by residues 79–83 (PGYDK) and threonine 103. Lysine 83 serves as a coordination point for substrate. Residue 128–132 (NRMGF) coordinates substrate. FMN is bound by residues asparagine 160 and asparagine 193. A substrate-binding site is contributed by asparagine 193. Residue serine 196 is the Nucleophile of the active site. Asparagine 198 lines the substrate pocket. Residues lysine 231 and threonine 259 each contribute to the FMN site. 260–261 (NT) is a substrate binding site. Residues glycine 289, glycine 318, and 339–340 (YT) contribute to the FMN site.

Belongs to the dihydroorotate dehydrogenase family. Type 2 subfamily. As to quaternary structure, monomer. The cofactor is FMN.

The protein localises to the cell membrane. It carries out the reaction (S)-dihydroorotate + a quinone = orotate + a quinol. It functions in the pathway pyrimidine metabolism; UMP biosynthesis via de novo pathway; orotate from (S)-dihydroorotate (quinone route): step 1/1. In terms of biological role, catalyzes the conversion of dihydroorotate to orotate with quinone as electron acceptor. The polypeptide is Dihydroorotate dehydrogenase (quinone) (Trichodesmium erythraeum (strain IMS101)).